The chain runs to 838 residues: Probable beta-glucosidase I (838 aa).

A glycan (N-linked (GlcNAc...) asparagine) is linked at N197. Residue D225 is part of the active site. The 161-residue stretch at 395–555 (DGKKGFKFRV…SQEELISKAA (161 aa)) folds into the PA14 domain. Residue N493 is glycosylated (N-linked (GlcNAc...) asparagine).

The protein belongs to the glycosyl hydrolase 3 family.

Its subcellular location is the secreted. The catalysed reaction is Hydrolysis of terminal, non-reducing beta-D-glucosyl residues with release of beta-D-glucose.. Its pathway is glycan metabolism; cellulose degradation. Beta-glucosidases are one of a number of cellulolytic enzymes involved in the degradation of cellulosic biomass. Catalyzes the last step releasing glucose from the inhibitory cellobiose. The chain is Probable beta-glucosidase I (bglI) from Aspergillus fumigatus (strain ATCC MYA-4609 / CBS 101355 / FGSC A1100 / Af293) (Neosartorya fumigata).